A 134-amino-acid polypeptide reads, in one-letter code: Complexin-2 (134 aa).

The tract at residues 1–114 (MDFVMKQALG…CGDEEEEEEE (114 aa)) is disordered. Residues 15–85 (DMGKMLGGEE…EEKEAEEKAA (71 aa)) show a composition bias toward basic and acidic residues. Residues 28-84 (PDAQKKEEERQEALRQQEEERKAKHARMEAEREKVRQQIRDKYGLKKKEEKEAEEKA) adopt a coiled-coil conformation. The segment at 41–97 (LRQQEEERKAKHARMEAEREKVRQQIRDKYGLKKKEEKEAEEKAALEQPCEGSLTRP) is interaction with the SNARE complex. Serine 93 is modified (phosphoserine).

Belongs to the complexin/synaphin family. As to quaternary structure, binds to the SNARE core complex containing SNAP25, VAMP2 and STX1A. Nervous system. Also present in adrenal chromaffin cells (at protein level).

It localises to the cytoplasm. Its subcellular location is the cytosol. The protein resides in the presynapse. It is found in the nucleus. The protein localises to the perikaryon. Functionally, negatively regulates the formation of synaptic vesicle clustering at active zone to the presynaptic membrane in postmitotic neurons. Positively regulates a late step in exocytosis of various cytoplasmic vesicles, such as synaptic vesicles and other secretory vesicles. Also involved in mast cell exocytosis. This is Complexin-2 (CPLX2) from Bos taurus (Bovine).